We begin with the raw amino-acid sequence, 156 residues long: Small ribosomal subunit protein uS7 (156 aa).

It belongs to the universal ribosomal protein uS7 family. As to quaternary structure, part of the 30S ribosomal subunit. Contacts proteins S9 and S11.

In terms of biological role, one of the primary rRNA binding proteins, it binds directly to 16S rRNA where it nucleates assembly of the head domain of the 30S subunit. Is located at the subunit interface close to the decoding center, probably blocks exit of the E-site tRNA. This Burkholderia ambifaria (strain MC40-6) protein is Small ribosomal subunit protein uS7.